The following is a 279-amino-acid chain: Inorganic pyrophosphatase 2 (279 aa).

The active-site Nucleophile is Asp12. Mg(2+) contacts are provided by Asp12 and Asp14. Asp14 serves as the catalytic Proton donor. Substrate-binding residues include Asp23 and Asp98. Mg(2+) is bound at residue Asp182.

Belongs to the HAD-like hydrolase superfamily. As to quaternary structure, tetramer. Requires Mg(2+) as cofactor.

It catalyses the reaction diphosphate + H2O = 2 phosphate + H(+). Functionally, catalyzes the specific cleavage of pyrophosphate. The chain is Inorganic pyrophosphatase 2 from Arabidopsis thaliana (Mouse-ear cress).